The primary structure comprises 359 residues: Alkanal monooxygenase alpha chain (359 aa).

It belongs to the bacterial luciferase oxidoreductase family. In terms of assembly, heterodimer of an alpha and a beta chain.

It catalyses the reaction a long-chain fatty aldehyde + FMNH2 + O2 = a long-chain fatty acid + hnu + FMN + H2O + 2 H(+). In terms of biological role, light-emitting reaction in luminous bacteria. The chain is Alkanal monooxygenase alpha chain (luxA) from Photorhabdus laumondii subsp. laumondii (strain DSM 15139 / CIP 105565 / TT01) (Photorhabdus luminescens subsp. laumondii).